Here is a 91-residue protein sequence, read N- to C-terminus: Lipolysis-activating peptide 1-alpha chain (91 aa).

An N-terminal signal peptide occupies residues 1 to 21; it reads MNIKLFCFLSILISLTGLSLS. The LCN-type CS-alpha/beta domain maps to 23–87; that stretch reads DDGNYPIDAN…FFDAYKTYCK (65 aa). Intrachain disulfides connect cysteine 38/cysteine 61, cysteine 47/cysteine 66, and cysteine 51/cysteine 68.

The protein belongs to the long (3 C-C) scorpion toxin superfamily. Heterodimer of this alpha chain and a beta chain (AC D9U2A2). Expressed by the venom gland.

The protein resides in the secreted. In terms of biological role, the heterodimer LVP1 induces lipolysis in rat adipocytes. Induction of lipolysis by LVP1 appears to be mediated through the beta-2 adrenergic receptor pathway (ADRB2). This Lychas mucronatus (Chinese swimming scorpion) protein is Lipolysis-activating peptide 1-alpha chain.